We begin with the raw amino-acid sequence, 417 residues long: Serine hydroxymethyltransferase (417 aa).

Residues leucine 122 and 126 to 128 (GHL) each bind (6S)-5,6,7,8-tetrahydrofolate. Lysine 231 bears the N6-(pyridoxal phosphate)lysine mark.

The protein belongs to the SHMT family. As to quaternary structure, homodimer. Pyridoxal 5'-phosphate serves as cofactor.

It localises to the cytoplasm. The catalysed reaction is (6R)-5,10-methylene-5,6,7,8-tetrahydrofolate + glycine + H2O = (6S)-5,6,7,8-tetrahydrofolate + L-serine. It functions in the pathway one-carbon metabolism; tetrahydrofolate interconversion. Its pathway is amino-acid biosynthesis; glycine biosynthesis; glycine from L-serine: step 1/1. In terms of biological role, catalyzes the reversible interconversion of serine and glycine with tetrahydrofolate (THF) serving as the one-carbon carrier. This reaction serves as the major source of one-carbon groups required for the biosynthesis of purines, thymidylate, methionine, and other important biomolecules. Also exhibits THF-independent aldolase activity toward beta-hydroxyamino acids, producing glycine and aldehydes, via a retro-aldol mechanism. This Caldicellulosiruptor saccharolyticus (strain ATCC 43494 / DSM 8903 / Tp8T 6331) protein is Serine hydroxymethyltransferase.